Reading from the N-terminus, the 322-residue chain is MEPQNTSTVTNFQLLGFQNLLEWQALLFVIFLLIYCLTIIGNVVIITVVSQGLRLHSPMYMFLQHLSFLEVWYTSTTVPLLLANLLSWGQAISFSACMAQLYFFVFLGATECFLLAFMAYDRYLAICSPLRYPFLMHRGLCARLVVVSWCTGVSTGFLPSLMISRLDFCGRNQINHFFCDLPPLMQLSCSRVYITEVTIFILSIAVLCICFFLTLGPYVFIVSSILRIPSTSGRRKTFSTCGSHLAVVTLYYGTMISMYVCPSPHLLPEINKIISVFYTVVTPLLNPVIYSLRNKDFKEAVRKVMRRKCGILWSTSKRKFLY.

Residues 1–25 (MEPQNTSTVTNFQLLGFQNLLEWQA) lie on the Extracellular side of the membrane. A glycan (N-linked (GlcNAc...) asparagine) is linked at Asn5. The chain crosses the membrane as a helical span at residues 26-46 (LLFVIFLLIYCLTIIGNVVII). Over 47-54 (TVVSQGLR) the chain is Cytoplasmic. Residues 55–75 (LHSPMYMFLQHLSFLEVWYTS) form a helical membrane-spanning segment. Residues 76–99 (TTVPLLLANLLSWGQAISFSACMA) are Extracellular-facing. Residues Cys97 and Cys189 are joined by a disulfide bond. The chain crosses the membrane as a helical span at residues 100–120 (QLYFFVFLGATECFLLAFMAY). The Cytoplasmic portion of the chain corresponds to 121–139 (DRYLAICSPLRYPFLMHRG). The chain crosses the membrane as a helical span at residues 140–160 (LCARLVVVSWCTGVSTGFLPS). The Extracellular segment spans residues 161–197 (LMISRLDFCGRNQINHFFCDLPPLMQLSCSRVYITEV). The chain crosses the membrane as a helical span at residues 198-217 (TIFILSIAVLCICFFLTLGP). Over 218–237 (YVFIVSSILRIPSTSGRRKT) the chain is Cytoplasmic. Residues 238–258 (FSTCGSHLAVVTLYYGTMISM) traverse the membrane as a helical segment. At 259 to 271 (YVCPSPHLLPEIN) the chain is on the extracellular side. The helical transmembrane segment at 272 to 292 (KIISVFYTVVTPLLNPVIYSL) threads the bilayer. The Cytoplasmic portion of the chain corresponds to 293–322 (RNKDFKEAVRKVMRRKCGILWSTSKRKFLY).

This sequence belongs to the G-protein coupled receptor 1 family.

The protein localises to the cell membrane. Odorant receptor. In Homo sapiens (Human), this protein is Olfactory receptor 11L1 (OR11L1).